A 718-amino-acid polypeptide reads, in one-letter code: Sodium/myo-inositol cotransporter (718 aa).

The Extracellular portion of the chain corresponds to 1-9; the sequence is MRAVLEAAD. Residues 10-29 traverse the membrane as a helical segment; that stretch reads IAVVALYFILVMCIGFFAMW. Over 30-38 the chain is Cytoplasmic; it reads KSNRSTVSG. A helical membrane pass occupies residues 39–57; it reads YFLAGRSMTWVAIGASLFV. At 58 to 86 the chain is on the extracellular side; that stretch reads SNIGSEHFIGLAGSGAASGFAVGAWEFNA. A helical transmembrane segment spans residues 87–110; sequence LLLLQLLGWVFIPIYIRSGVYTMP. Residues 111–123 lie on the Cytoplasmic side of the membrane; the sequence is EYLSKRFGGHRIQ. The chain crosses the membrane as a helical span at residues 124-144; sequence VYFAALSLLLYIFTKLSVDLY. Topologically, residues 145 to 157 are extracellular; it reads SGALFIQESLGWN. Residues 158–183 traverse the membrane as a helical segment; the sequence is LYVSVILLIGMTALLTVTGGLVAVIY. Residues 184 to 186 are Cytoplasmic-facing; sequence TDT. A helical membrane pass occupies residues 187 to 205; the sequence is LQALLMIIGALTLMVISMV. The Extracellular portion of the chain corresponds to 206–303; that stretch reads KIGGFEEVKR…HAKGSTLMAG (98 aa). N-linked (GlcNAc...) asparagine glycosylation occurs at Asn232. A helical membrane pass occupies residues 304–324; it reads FLKLLPMFIIVVPGMISRIVF. Over 325–353 the chain is Cytoplasmic; it reads ADEIACINPEHCMQVCGSRAGCSNIAYPR. The chain crosses the membrane as a helical span at residues 354 to 376; that stretch reads LVMTLVPVGLRGLMMAVMIAALM. Residues 377-406 lie on the Extracellular side of the membrane; it reads SDLDSIFNSASTIFTLDVYKLIRKSASSRE. The helical transmembrane segment at 407 to 430 threads the bilayer; it reads LMIVGRIFVAFMVVISIAWVPIIV. The Cytoplasmic segment spans residues 431 to 443; the sequence is EMQGGQMYLYIQE. A helical transmembrane segment spans residues 444 to 462; that stretch reads VADYLTPPVAALFLLAIFW. Residues 463 to 510 are Extracellular-facing; sequence KRCNEQGAFYGGMAGFVLGAVRLILAFTYRAPECDQPDNRPGFIKDIH. A helical transmembrane segment spans residues 511 to 532; that stretch reads YMYVATALFWITGLITVIVSLL. Over 533–695 the chain is Cytoplasmic; the sequence is TPPPTKDQIR…QMLEETPQVK (163 aa). Residues Ser594 and Ser632 each carry the phosphoserine modification. A helical membrane pass occupies residues 696–716; sequence VILNIGLFAVCSLGIFMFVYF. Residues 717–718 are Extracellular-facing; the sequence is SL.

The protein belongs to the sodium:solute symporter (SSF) (TC 2.A.21) family. In terms of assembly, interacts with KCNQ2 (via the pore module). Interacts with KCNQ1; this interaction is direct. Forms coregulatory complexes with ion channels KCNQ2-KCNQ3 and KCNQ1-KCNE2. In terms of tissue distribution, highly expressed in kidney, placenta, and brain and at a lesser extent in thymus, lung, bladder, and testes. Expressed in the choroid plexus epithelium (at protein level).

Its subcellular location is the apical cell membrane. It is found in the basolateral cell membrane. It carries out the reaction myo-inositol(out) + 2 Na(+)(out) = myo-inositol(in) + 2 Na(+)(in). The enzyme catalyses scyllo-inositol(out) + 2 Na(+)(out) = scyllo-inositol(in) + 2 Na(+)(in). Its function is as follows. Electrogenic Na(+)-coupled sugar symporter that actively transports myo-inositol and its stereoisomer scyllo-inositol across the plasma membrane, with a Na(+) to sugar coupling ratio of 2:1. Maintains myo-inositol concentration gradient that defines cell volume and fluid balance during osmotic stress, in particular in the fetoplacental unit and central nervous system. Forms coregulatory complexes with voltage-gated K(+) ion channels, allosterically altering ion selectivity, voltage dependence and gating kinetics of the channel. In turn, K(+) efflux through the channel forms a local electrical gradient that modulates electrogenic Na(+)-coupled myo-inositol influx through the transporter. Associates with KCNQ1-KCNE2 channel in the apical membrane of choroid plexus epithelium and regulates the myo-inositol gradient between blood and cerebrospinal fluid with an impact on neuron excitability. Associates with KCNQ2-KCNQ3 channel altering ion selectivity, increasing Na(+) and Cs(+) permeation relative to K(+) permeation. Provides myo-inositol precursor for biosynthesis of phosphoinositides such as PI(4,5)P2, thus indirectly affecting the activity of phosphoinositide-dependent ion channels and Ca(2+) signaling upon osmotic stress. (Microbial infection) Functions as a retroviral receptor for M813 murine leukemia virus (MuLV) entry. The sequence is that of Sodium/myo-inositol cotransporter (Slc5a3) from Mus musculus (Mouse).